The following is a 94-amino-acid chain: DNA-directed RNA polymerase subunit omega (94 aa).

It belongs to the RNA polymerase subunit omega family. The RNAP catalytic core consists of 2 alpha, 1 beta, 1 beta' and 1 omega subunit. When a sigma factor is associated with the core the holoenzyme is formed, which can initiate transcription.

It carries out the reaction RNA(n) + a ribonucleoside 5'-triphosphate = RNA(n+1) + diphosphate. Functionally, promotes RNA polymerase assembly. Latches the N- and C-terminal regions of the beta' subunit thereby facilitating its interaction with the beta and alpha subunits. The chain is DNA-directed RNA polymerase subunit omega from Frankia alni (strain DSM 45986 / CECT 9034 / ACN14a).